Here is a 396-residue protein sequence, read N- to C-terminus: Cystathionine beta-lyase (396 aa).

Lysine 211 is subject to N6-(pyridoxal phosphate)lysine.

The protein belongs to the trans-sulfuration enzymes family. As to quaternary structure, homotetramer. Pyridoxal 5'-phosphate is required as a cofactor.

The protein localises to the cytoplasm. The catalysed reaction is L,L-cystathionine + H2O = L-homocysteine + pyruvate + NH4(+). It catalyses the reaction an S-substituted L-cysteine + H2O = a thiol + pyruvate + NH4(+). Its pathway is amino-acid biosynthesis; L-methionine biosynthesis via de novo pathway; L-homocysteine from L-cystathionine: step 1/1. Its function is as follows. Catalyzes the cleavage of cystathionine to homocysteine, pyruvate and ammonia during methionine biosynthesis. This Haemophilus influenzae (strain ATCC 51907 / DSM 11121 / KW20 / Rd) protein is Cystathionine beta-lyase (metC).